The following is a 620-amino-acid chain: Protein regulator of cytokinesis 1 (620 aa).

The tract at residues 1 to 303 is required for the interaction with KIF4A; that stretch reads MRRSEVLAEE…IEAIRVELVQ (303 aa). Positions 1–341 are dimerization; it reads MRRSEVLAEE…QLHDAEIVRL (341 aa). Coiled coils occupy residues 96-133, 211-304, and 383-463; these read ILQL…ELCE, SLEN…LVQY, and GNLL…TEML. The segment at 342 to 466 is spectrin-fold; the sequence is KNYYEVHKEL…QTETEMLYGS (125 aa). The span at 446-459 shows a compositional bias: basic and acidic residues; it reads AKQERQLKNKKQTE. The tract at residues 446–488 is disordered; the sequence is AKQERQLKNKKQTETEMLYGSAPRTPSKRRGLAPNTPGKARKL. Positions 467–620 are unstructured, Arg/Lys rich; sequence APRTPSKRRG…GILNSTNIQS (154 aa). T470 and T481 each carry phosphothreonine; by CDK1. Phosphoserine occurs at positions 513, 541, and 571. Residues 517–545 are disordered; it reads RLPPSGSKPVAASTCSGKKTPRTGRHGAN. A Phosphothreonine modification is found at T578. A disordered region spans residues 600–620; that stretch reads LSKASKSDATSGILNSTNIQS. Over residues 606-620 the composition is skewed to polar residues; the sequence is SDATSGILNSTNIQS. T616 carries the post-translational modification Phosphothreonine; by PLK1.

The protein belongs to the MAP65/ASE1 family. As to quaternary structure, homodimer. Interacts with the C-terminal Rho-GAP domain and the basic region of RACGAP1. The interaction with RACGAP1 inhibits its GAP activity towards CDC42 in vitro, which may be required for maintaining normal spindle morphology. Interacts (via N-terminus) with the C-terminus of CENPE (via C-terminus); the interaction occurs during late mitosis. Interacts (via N-terminus) with KIF4A (via C-terminus); the interaction is required for the progression of mitosis. Interacts (via N-terminus) with KIF23 (via C-terminus); the interaction occurs during late mitosis. Interacts with KIF14 and KIF20A. Interacts with PLK1. Interacts with KIF20B. Interacts with CCDC66. Phosphorylation by CDK1 in early mitosis holds PRC1 in an inactive monomeric state, during the metaphase to anaphase transition, PRC1 is dephosphorylated, promoting interaction with KIF4A, which then translocates PRC1 along mitotic spindles to the plus ends of antiparallel interdigitating microtubules. Dephosphorylation also promotes MT-bundling activity by allowing dimerization. Phosphorylation by CDK1 prevents PLK1-binding: upon degradation of CDK1 at anaphase and dephosphorylation, it is then phosphorylated by PLK1, leading to cytokinesis. Overexpressed in bladder cancer cells.

The protein localises to the nucleus. It localises to the cytoplasm. It is found in the cytoskeleton. The protein resides in the spindle pole. Its subcellular location is the midbody. The protein localises to the chromosome. Its function is as follows. Key regulator of cytokinesis that cross-links antiparrallel microtubules at an average distance of 35 nM. Essential for controlling the spatiotemporal formation of the midzone and successful cytokinesis. Required for KIF14 localization to the central spindle and midbody. Required to recruit PLK1 to the spindle. Stimulates PLK1 phosphorylation of RACGAP1 to allow recruitment of ECT2 to the central spindle. Acts as an oncogene for promoting bladder cancer cells proliferation, apoptosis inhibition and carcinogenic progression. This chain is Protein regulator of cytokinesis 1, found in Homo sapiens (Human).